A 123-amino-acid polypeptide reads, in one-letter code: UPF0102 protein Mflv_4140 (123 aa).

This sequence belongs to the UPF0102 family.

This Mycolicibacterium gilvum (strain PYR-GCK) (Mycobacterium gilvum (strain PYR-GCK)) protein is UPF0102 protein Mflv_4140.